The primary structure comprises 305 residues: Tyrosine recombinase XerC (305 aa).

The 94-residue stretch at 1 to 94 folds into the Core-binding (CB) domain; that stretch reads MSSVDEFLTY…ACRSYYAWLL (94 aa). A Tyr recombinase domain is found at 115–292; sequence KLPQVLDADE…DFQHLAKVYD (178 aa). Active-site residues include Arg-154, Lys-178, His-244, Arg-247, and His-270. Residue Tyr-279 is the O-(3'-phospho-DNA)-tyrosine intermediate of the active site.

This sequence belongs to the 'phage' integrase family. XerC subfamily. As to quaternary structure, forms a cyclic heterotetrameric complex composed of two molecules of XerC and two molecules of XerD.

The protein localises to the cytoplasm. Site-specific tyrosine recombinase, which acts by catalyzing the cutting and rejoining of the recombining DNA molecules. The XerC-XerD complex is essential to convert dimers of the bacterial chromosome into monomers to permit their segregation at cell division. It also contributes to the segregational stability of plasmids. This is Tyrosine recombinase XerC from Xanthomonas axonopodis pv. citri (strain 306).